The following is a 179-amino-acid chain: Alpha-tubulin N-acetyltransferase (179 aa).

The N-acetyltransferase domain maps to 1–175 (MRVEVVRAPG…NRFVVFDAYF (175 aa)). Residues 109-122 (FYVDEVWQRRGVGL) and 145-154 (SPKLFAFLKK) each bind acetyl-CoA.

It belongs to the acetyltransferase ATAT1 family.

The catalysed reaction is L-lysyl-[alpha-tubulin] + acetyl-CoA = N(6)-acetyl-L-lysyl-[alpha-tubulin] + CoA + H(+). Specifically acetylates 'Lys-40' in alpha-tubulin on the lumenal side of microtubules. Promotes microtubule destabilization and accelerates microtubule dynamics; this activity may be independent of acetylation activity. Acetylates alpha-tubulin with a slow enzymatic rate, due to a catalytic site that is not optimized for acetyl transfer. Enters the microtubule through each end and diffuses quickly throughout the lumen of microtubules. Acetylates only long/old microtubules because of its slow acetylation rate since it does not have time to act on dynamically unstable microtubules before the enzyme is released. The sequence is that of Alpha-tubulin N-acetyltransferase from Phytophthora infestans (strain T30-4) (Potato late blight agent).